Reading from the N-terminus, the 361-residue chain is Glucose 1-dehydrogenase (361 aa).

A Zn(2+)-binding site is contributed by Cys41. Thr43 contacts substrate. Zn(2+) is bound by residues His68 and Glu69. 3 residues coordinate substrate: Glu119, Glu156, and Asn160. Residue Glu156 coordinates Zn(2+). NADP(+)-binding positions include 216–218 (NRH), 275–277 (FGT), 304–306 (SVD), and Lys349. Asp306 contributes to the substrate binding site.

Belongs to the zinc-containing alcohol dehydrogenase family. Glucose 1-dehydrogenase subfamily. As to quaternary structure, homotetramer. The cofactor is Zn(2+).

The catalysed reaction is D-glucose + NAD(+) = D-glucono-1,5-lactone + NADH + H(+). The enzyme catalyses D-glucose + NADP(+) = D-glucono-1,5-lactone + NADPH + H(+). It carries out the reaction D-galactose + NAD(+) = D-galactono-1,4-lactone + NADH + H(+). It catalyses the reaction D-galactose + NADP(+) = D-galactono-1,5-lactone + NADPH + H(+). In terms of biological role, catalyzes the NAD(P)(+)-dependent oxidation of D-glucose to D-gluconate via gluconolactone. Is also significantly active with galactose as substrate, but not with mannose or glucose 6-phosphate. Can utilize both NAD(+) and NADP(+) as electron acceptor, with a marked preference for NADP(+). Physiologically, may be involved in the degradation of both glucose and galactose through a non-phosphorylative variant of the Entner-Doudoroff pathway. The polypeptide is Glucose 1-dehydrogenase (Thermoplasma acidophilum (strain ATCC 25905 / DSM 1728 / JCM 9062 / NBRC 15155 / AMRC-C165)).